Reading from the N-terminus, the 133-residue chain is ATP synthase epsilon chain, chloroplastic (133 aa).

This sequence belongs to the ATPase epsilon chain family. As to quaternary structure, F-type ATPases have 2 components, CF(1) - the catalytic core - and CF(0) - the membrane proton channel. CF(1) has five subunits: alpha(3), beta(3), gamma(1), delta(1), epsilon(1). CF(0) has three main subunits: a, b and c.

It is found in the plastid. The protein localises to the chloroplast thylakoid membrane. Its function is as follows. Produces ATP from ADP in the presence of a proton gradient across the membrane. The polypeptide is ATP synthase epsilon chain, chloroplastic (Zygnema circumcarinatum (Green alga)).